A 330-amino-acid chain; its full sequence is Endochitinase Ziz m 1.0101 (330 aa).

Residues 1–24 (MVPQAKLVVASLILTSALIQTSEA) form the signal peptide. In terms of domain architecture, GH18 spans 26-330 (GGIATYWGQY…LRTKFMYQNA (305 aa)). 3 disulfide bridges follow: Cys-47–Cys-90, Cys-77–Cys-80, and Cys-187–Cys-219. Positions 72–86 (NISGHCSDCTFLGEE) are binds to IgE in 70% of the 10 patients tested allergic to Indian jujube and latex. A binds to IgE in 100% of the 10 patients tested allergic to Indian jujube and latex; sufficient for prediction of the presence of allergic reactions in these patients region spans residues 292–301 (VWNRYYDLKT). 2 binds to IgE in 70% of the 10 patients tested allergic to Indian jujube and latex regions span residues 300-311 (KTNYSSSIILEY) and 309-320 (LEYVNSGTKYLP).

It belongs to the glycosyl hydrolase 18 family. Chitinase class II subfamily.

It is found in the secreted. The enzyme catalyses Random endo-hydrolysis of N-acetyl-beta-D-glucosaminide (1-&gt;4)-beta-linkages in chitin and chitodextrins.. Defense against chitin containing fungal pathogens. The polypeptide is Endochitinase Ziz m 1.0101 (Ziziphus mauritiana (Indian jujube)).